Reading from the N-terminus, the 142-residue chain is Large ribosomal subunit protein uL13 (142 aa).

This sequence belongs to the universal ribosomal protein uL13 family. In terms of assembly, part of the 50S ribosomal subunit.

This protein is one of the early assembly proteins of the 50S ribosomal subunit, although it is not seen to bind rRNA by itself. It is important during the early stages of 50S assembly. In Trichlorobacter lovleyi (strain ATCC BAA-1151 / DSM 17278 / SZ) (Geobacter lovleyi), this protein is Large ribosomal subunit protein uL13.